A 121-amino-acid chain; its full sequence is Large ribosomal subunit protein uL24 (121 aa).

The disordered stretch occupies residues 1 to 23 (MVRIESSQPRKQRKARYDAPSHM).

Belongs to the universal ribosomal protein uL24 family. Part of the 50S ribosomal subunit.

One of two assembly initiator proteins, it binds directly to the 5'-end of the 23S rRNA, where it nucleates assembly of the 50S subunit. Functionally, located at the polypeptide exit tunnel on the outside of the subunit. The protein is Large ribosomal subunit protein uL24 of Methanoregula boonei (strain DSM 21154 / JCM 14090 / 6A8).